We begin with the raw amino-acid sequence, 333 residues long: Chlorophyllide reductase 35.5 kDa chain (333 aa).

The segment at 1-22 is disordered; that stretch reads MTDAPNLKGFDARLREEAAEEP. ATP is bound by residues 45–50 and K74; that span reads GSGKSF. S49 lines the Mg(2+) pocket. C130 and C165 together coordinate [4Fe-4S] cluster. An ATP-binding site is contributed by 219 to 220; the sequence is NK.

This sequence belongs to the NifH/BchL/ChlL family. Homodimer. Chlorophyllide reductase is composed of three subunits; BchX, BchY and BchZ. [4Fe-4S] cluster serves as cofactor.

It catalyses the reaction 3-deacetyl-3-vinylbacteriochlorophyllide a + 2 oxidized [2Fe-2S]-[ferredoxin] + ADP + phosphate = chlorophyllide a + 2 reduced [2Fe-2S]-[ferredoxin] + ATP + H2O + H(+). The catalysed reaction is bacteriochlorophyllide a + 2 oxidized [2Fe-2S]-[ferredoxin] + ADP + phosphate = 3-acetyl-3-devinylchlorophyllide a + 2 reduced [2Fe-2S]-[ferredoxin] + ATP + H2O + H(+). The enzyme catalyses 3-deacetyl-3-(1-hydroxyethyl)bacteriochlorophyllide a + 2 oxidized [2Fe-2S]-[ferredoxin] + ADP + phosphate = 3-devinyl-3-(1-hydroxyethyl)chlorophyllide a + 2 reduced [2Fe-2S]-[ferredoxin] + ATP + H2O + H(+). Its pathway is porphyrin-containing compound metabolism; bacteriochlorophyll biosynthesis. Its function is as follows. Converts chlorophylls (Chl) into bacteriochlorophylls (BChl) by reducing ring B of the tetrapyrrole. The protein is Chlorophyllide reductase 35.5 kDa chain (bchX) of Rhodobacter capsulatus (strain ATCC BAA-309 / NBRC 16581 / SB1003).